Here is a 258-residue protein sequence, read N- to C-terminus: Ferredoxin--NADP reductase (258 aa).

Residues 2–102 (SNLYTERVLS…RKPTGTLVHD (101 aa)) enclose the FAD-binding FR-type domain. 9 residues coordinate FAD: arginine 51, alanine 52, tyrosine 53, serine 54, phenylalanine 67, isoleucine 69, leucine 76, threonine 77, and threonine 117. Valine 144, arginine 145, threonine 181, arginine 182, arginine 190, serine 223, glutamate 227, phenylalanine 255, and glutamate 257 together coordinate NADP(+). Residues phenylalanine 255, glutamate 257, and lysine 258 each contribute to the FAD site.

This sequence belongs to the ferredoxin--NADP reductase type 1 family. In terms of assembly, monomer. Requires FAD as cofactor.

The enzyme catalyses 2 reduced [2Fe-2S]-[ferredoxin] + NADP(+) + H(+) = 2 oxidized [2Fe-2S]-[ferredoxin] + NADPH. Its function is as follows. Transports electrons between ferredoxin and NADPH. Provides electrons to heme oxygenase (pigA) allowing anaerobic heme degradation. Provides electrons necessary to reduce and mobilize Fe(3+) in a heterooligomeric bacterioferritin (BFR) complex to Fe(2+). Reduction of Fe(3+) in a pure FtnA BFR does not require Bfd. Reduction of Fe(3+) in a pure BfrB BFR does require Bfd. The protein is Ferredoxin--NADP reductase of Pseudomonas aeruginosa (strain ATCC 15692 / DSM 22644 / CIP 104116 / JCM 14847 / LMG 12228 / 1C / PRS 101 / PAO1).